The sequence spans 303 residues: Caspase-7 (303 aa).

The segment covering 1–21 (MADDQGCIEEQGVEDSANEDS) has biased composition (acidic residues). The disordered stretch occupies residues 1–30 (MADDQGCIEEQGVEDSANEDSVDAKPDRSS). Residue Ala-2 is modified to N-acetylalanine. Positions 2-23 (ADDQGCIEEQGVEDSANEDSVD) are cleaved as a propeptide — N-terminally processed. Ser-30 carries the phosphoserine; by PAK2 modification. Ser-37 bears the Phosphoserine mark. The exosite stretch occupies residues 38 to 41 (KKKK). A loop L1 region spans residues 76-87 (KNFDKVTGMGVR). Residue His-144 is part of the active site. A Phosphothreonine; by PAK2 modification is found at Thr-173. The active site involves Cys-186. The segment at 187–196 (RGTELDDGIQ) is loop L2. A propeptide spanning residues 199-206 (SGPINDTD) is cleaved from the precursor. The interval 226–238 (VPGYYSWRSPGRG) is loop L3. Arg-233 carries the post-translational modification (Microbial infection) ADP-riboxanated arginine. Phosphoserine; by PAK2 is present on Ser-239. The segment at 274-288 (ESQSDDPHFHEKKQI) is loop L4.

Belongs to the peptidase C14A family. As to quaternary structure, heterotetramer that consists of two anti-parallel arranged heterodimers, each one formed by a 20 kDa (p20) and a 11 kDa (p11) subunit. Interacts with XIAP (via its second BIR domain); inhibiting CASP7 activity. Interacts with BIRC6/bruce. Interacts with ATXN3 (short isoform 1). Interacts with HSPA5. In terms of processing, cleavage by different proteases, such as granzyme B (GZMB), caspase-1 (CASP1), caspase-8 (CASP8), caspase-9 (CASP9) or caspase-10 (CASP10) generate the two active subunits. Its involvement in different programmed cell death processes is probably specified by the protease that activates CASP7. Cleaved and activated by initiator caspases (CASP8, CASP9 and/or CASP10), leading to execution phase of apoptosis. Cleavage and maturation by GZMB regulates granzyme-mediated programmed cell death. Cleaved and activated by CASP1 in response to bacterial infection. Propeptide domains can also be cleaved efficiently by CASP3. Active heterodimers between the small subunit of caspase-7 and the large subunit of CASP3, and vice versa, also occur. Also cleaved at the N-terminus at alternative sites by CAPN1, leading to its activation. Post-translationally, phosphorylation at Ser-30 and Ser-239 by PAK2 inhibits its activity. Phosphorylation at Ser-30 prevents cleavage and activation by initiator caspase CASP9, while phosphorylation at Ser-239 prevents thiol protease activity by preventing substrate-binding. (Microbial infection) ADP-riboxanation by C.violaceum CopC blocks CASP7 processing, preventing CASP7 activation and ability to recognize and cleave substrates. In terms of processing, ubiquitinated by BIRC6; this activity is inhibited by DIABLO/SMAC. In terms of tissue distribution, highly expressed in lung, skeletal muscle, liver, kidney, spleen and heart, and moderately in testis. No expression in the brain.

The protein resides in the cytoplasm. It is found in the cytosol. It localises to the nucleus. Its subcellular location is the secreted. The protein localises to the extracellular space. The enzyme catalyses Strict requirement for an Asp residue at position P1 and has a preferred cleavage sequence of Asp-Glu-Val-Asp-|-.. During activation, the N-terminal disordered prodomain is removed by cleavage. Concomitantly, double cleavage gives rise to a large Caspase-7 subunit p20 and a small Caspase-7 subunit p11. The two large and two small subunits then assemble to form the active CASP7 complex. Can be cleaved and activated by different caspases, depending on the context. Cleaved and activated by initiator caspases (CASP8, CASP9 and/or CASP10), leading to execution phase of apoptosis. Inhibited by XIAP, which directly binds to the active site pocket and obstructs substrate entry. Cleavage and maturation by GZMB regulates granzyme-mediated programmed cell death. Cleavage and maturation by CASP1 regulates pyroptosis. Phosphorylation at Ser-30 and Ser-239 by PAK2 inhibits its activity. Inhibited by isatin sulfonamides. Inhibited by 2-(2,4-Dichlorophenoxy)- N-(2-mercapto-ethyl)-acetamide (DICA) and 5-Fluoro-1H-indole-2- carboxylic acid (2-mercapto-ethyl)-amide (FICA) allosteric inhibitors, which disrupt an interaction between Arg-187 and Tyr-223. Specifically inhibited by DARPin D7.18 and D7.43, which specifically bind to the precursor CASP7 and prevent its processing and activation. Inhibited by BIRC6; following inhibition of BIRC6-caspase binding by DIABLO/SMAC, BIRC6 is subjected to caspase cleavage, leading to an increase in active caspases. In terms of biological role, thiol protease involved in different programmed cell death processes, such as apoptosis, pyroptosis or granzyme-mediated programmed cell death, by proteolytically cleaving target proteins. Has a marked preference for Asp-Glu-Val-Asp (DEVD) consensus sequences, with some plasticity for alternate non-canonical sequences. Its involvement in the different programmed cell death processes is probably determined by upstream proteases that activate CASP7. Acts as an effector caspase involved in the execution phase of apoptosis: following cleavage and activation by initiator caspases (CASP8, CASP9 and/or CASP10), mediates execution of apoptosis by catalyzing cleavage of proteins, such as CLSPN, PARP1, PTGES3 and YY1. Compared to CASP3, acts as a minor executioner caspase and cleaves a limited set of target proteins. Acts as a key regulator of the inflammatory response in response to bacterial infection by catalyzing cleavage and activation of the sphingomyelin phosphodiesterase SMPD1 in the extracellular milieu, thereby promoting membrane repair. Regulates pyroptosis in intestinal epithelial cells: cleaved and activated by CASP1 in response to S.typhimurium infection, promoting its secretion to the extracellular milieu, where it catalyzes activation of SMPD1, generating ceramides that repair membranes and counteract the action of gasdermin-D (GSDMD) pores. Regulates granzyme-mediated programmed cell death in hepatocytes: cleaved and activated by granzyme B (GZMB) in response to bacterial infection, promoting its secretion to the extracellular milieu, where it catalyzes activation of SMPD1, generating ceramides that repair membranes and counteract the action of perforin (PRF1) pores. Following cleavage by CASP1 in response to inflammasome activation, catalyzes processing and inactivation of PARP1, alleviating the transcription repressor activity of PARP1. Acts as an inhibitor of type I interferon production during virus-induced apoptosis by mediating cleavage of antiviral proteins CGAS, IRF3 and MAVS, thereby preventing cytokine overproduction. Cleaves and activates sterol regulatory element binding proteins (SREBPs). Cleaves phospholipid scramblase proteins XKR4, XKR8 and XKR9. In case of infection, catalyzes cleavage of Kaposi sarcoma-associated herpesvirus protein ORF57, thereby preventing expression of viral lytic genes. Cleaves BIRC6 following inhibition of BIRC6-caspase binding by DIABLO/SMAC. Lacks enzymatic activity. In Homo sapiens (Human), this protein is Caspase-7.